The following is a 226-amino-acid chain: DNA mismatch repair protein MutH (226 aa).

It belongs to the MutH family.

It localises to the cytoplasm. Sequence-specific endonuclease that cleaves unmethylated GATC sequences. It is involved in DNA mismatch repair. This chain is DNA mismatch repair protein MutH, found in Vibrio campbellii (strain ATCC BAA-1116).